A 123-amino-acid chain; its full sequence is Putative outer membrane protein CPn_0818/CP_1053/CPj0818/CpB0847 (123 aa).

Positions 1-30 (MKRQKRKQSITLIEMMVVITLIGIIGGALA) are cleaved as a signal peptide.

The protein localises to the cell outer membrane. The polypeptide is Putative outer membrane protein CPn_0818/CP_1053/CPj0818/CpB0847 (Chlamydia pneumoniae (Chlamydophila pneumoniae)).